A 442-amino-acid chain; its full sequence is Cell division protein FtsA (442 aa).

The protein belongs to the FtsA/MreB family. In terms of assembly, self-interacts. Interacts with FtsZ.

The protein localises to the cell inner membrane. Its function is as follows. Cell division protein that is involved in the assembly of the Z ring. May serve as a membrane anchor for the Z ring. This is Cell division protein FtsA from Rhizobium meliloti (strain 1021) (Ensifer meliloti).